A 221-amino-acid chain; its full sequence is Ribosomal RNA small subunit methyltransferase G (221 aa).

Residues glycine 78, phenylalanine 83, and arginine 150 each contribute to the S-adenosyl-L-methionine site.

It belongs to the methyltransferase superfamily. RNA methyltransferase RsmG family.

The protein localises to the cytoplasm. Its function is as follows. Specifically methylates the N7 position of a guanine in 16S rRNA. This Bifidobacterium longum (strain DJO10A) protein is Ribosomal RNA small subunit methyltransferase G.